The following is an 870-amino-acid chain: Glycerol-3-phosphate acyltransferase (870 aa).

The disordered stretch occupies residues Met1–Asn27. The segment covering Thr13–Asn27 has biased composition (polar residues). Residues His351–Asp356 carry the HXXXXD motif motif.

It belongs to the GPAT/DAPAT family.

The protein localises to the cell inner membrane. The enzyme catalyses sn-glycerol 3-phosphate + an acyl-CoA = a 1-acyl-sn-glycero-3-phosphate + CoA. The protein operates within phospholipid metabolism; CDP-diacylglycerol biosynthesis; CDP-diacylglycerol from sn-glycerol 3-phosphate: step 1/3. This is Glycerol-3-phosphate acyltransferase (plsB) from Xylella fastidiosa (strain 9a5c).